A 130-amino-acid chain; its full sequence is Small ribosomal subunit protein uS11c (130 aa).

This sequence belongs to the universal ribosomal protein uS11 family. As to quaternary structure, part of the 30S ribosomal subunit.

The protein localises to the plastid. It localises to the chloroplast. The polypeptide is Small ribosomal subunit protein uS11c (Pinus thunbergii (Japanese black pine)).